The primary structure comprises 835 residues: Protein translocase subunit SecA (835 aa).

Residues Q85, G103–T107, and D492 contribute to the ATP site. 4 residues coordinate Zn(2+): C819, C821, C830, and C831.

Belongs to the SecA family. In terms of assembly, monomer and homodimer. Part of the essential Sec protein translocation apparatus which comprises SecA, SecYEG and auxiliary proteins SecDF. Other proteins may also be involved. It depends on Zn(2+) as a cofactor.

It localises to the cell membrane. The protein resides in the cytoplasm. The catalysed reaction is ATP + H2O + cellular proteinSide 1 = ADP + phosphate + cellular proteinSide 2.. Its function is as follows. Part of the Sec protein translocase complex. Interacts with the SecYEG preprotein conducting channel. Has a central role in coupling the hydrolysis of ATP to the transfer of proteins into and across the cell membrane, serving as an ATP-driven molecular motor driving the stepwise translocation of polypeptide chains across the membrane. The sequence is that of Protein translocase subunit SecA from Clostridium botulinum (strain Okra / Type B1).